The chain runs to 374 residues: Mannitol-1-phosphate 5-dehydrogenase (374 aa).

Position 3 to 14 (3 to 14 (AIHFGAGNIGRG)) interacts with NAD(+).

This sequence belongs to the mannitol dehydrogenase family.

The enzyme catalyses D-mannitol 1-phosphate + NAD(+) = beta-D-fructose 6-phosphate + NADH + H(+). The sequence is that of Mannitol-1-phosphate 5-dehydrogenase from Halalkalibacterium halodurans (strain ATCC BAA-125 / DSM 18197 / FERM 7344 / JCM 9153 / C-125) (Bacillus halodurans).